A 217-amino-acid polypeptide reads, in one-letter code: tRNA (guanine-N(7)-)-methyltransferase (217 aa).

Residues glutamate 44, glutamate 69, aspartate 96, and aspartate 118 each contribute to the S-adenosyl-L-methionine site. Residue aspartate 118 is part of the active site. Substrate is bound by residues lysine 122, aspartate 154, and 191–194; that span reads TEYE.

This sequence belongs to the class I-like SAM-binding methyltransferase superfamily. TrmB family.

It carries out the reaction guanosine(46) in tRNA + S-adenosyl-L-methionine = N(7)-methylguanosine(46) in tRNA + S-adenosyl-L-homocysteine. The protein operates within tRNA modification; N(7)-methylguanine-tRNA biosynthesis. Functionally, catalyzes the formation of N(7)-methylguanine at position 46 (m7G46) in tRNA. The protein is tRNA (guanine-N(7)-)-methyltransferase of Bacillus thuringiensis (strain Al Hakam).